The sequence spans 79 residues: MRLFSSKVNSSAQIKDCSTWYPQPGQHISIRTFRELNQVPTSKNTSTKMESQSNGDNSKSTADLQEEVSSLPTTHTQRH.

2 stretches are compositionally biased toward polar residues: residues M1–Q13 and Q38–H79. The interval M1–H79 is disordered.

Belongs to the geminiviridae protein AC4/C4 family.

In terms of biological role, pathogenicity determinant. May act as a suppressor of RNA-mediated gene silencing, also known as post-transcriptional gene silencing (PTGS), a mechanism of plant viral defense that limits the accumulation of viral RNAs. This Bean golden yellow mosaic virus (isolate Puerto Rico-Japan) (BGYMV) protein is Protein AC4.